The primary structure comprises 311 residues: p-hydroxybenzoic acid efflux pump subunit AaeA (311 aa).

A helical transmembrane segment spans residues 11–31 (VGITVLVVVLAVIAIFNVWAF).

It belongs to the membrane fusion protein (MFP) (TC 8.A.1) family.

It is found in the cell inner membrane. Its function is as follows. Forms an efflux pump with AaeB. The chain is p-hydroxybenzoic acid efflux pump subunit AaeA from Yersinia pestis bv. Antiqua (strain Antiqua).